The primary structure comprises 327 residues: Undecaprenyl-phosphate 4-deoxy-4-formamido-L-arabinose transferase (327 aa).

The next 2 membrane-spanning stretches (helical) occupy residues 236-256 (LSLVGSVIALSGFTLAVLLVV) and 270-290 (VFTLFAVLFMFIGAQFVGMGL).

This sequence belongs to the glycosyltransferase 2 family.

Its subcellular location is the cell inner membrane. It carries out the reaction UDP-4-deoxy-4-formamido-beta-L-arabinose + di-trans,octa-cis-undecaprenyl phosphate = 4-deoxy-4-formamido-alpha-L-arabinopyranosyl di-trans,octa-cis-undecaprenyl phosphate + UDP. It participates in glycolipid biosynthesis; 4-amino-4-deoxy-alpha-L-arabinose undecaprenyl phosphate biosynthesis; 4-amino-4-deoxy-alpha-L-arabinose undecaprenyl phosphate from UDP-4-deoxy-4-formamido-beta-L-arabinose and undecaprenyl phosphate: step 1/2. Its pathway is bacterial outer membrane biogenesis; lipopolysaccharide biosynthesis. Catalyzes the transfer of 4-deoxy-4-formamido-L-arabinose from UDP to undecaprenyl phosphate. The modified arabinose is attached to lipid A and is required for resistance to polymyxin and cationic antimicrobial peptides. The protein is Undecaprenyl-phosphate 4-deoxy-4-formamido-L-arabinose transferase of Yersinia enterocolitica serotype O:8 / biotype 1B (strain NCTC 13174 / 8081).